A 434-amino-acid polypeptide reads, in one-letter code: Cytochrome c biogenesis protein CcsB (434 aa).

A run of 3 helical transmembrane segments spans residues 15–35 (LRVAIVLLLLIAACSGLGTAI), 73–93 (SNWFLLLLAWLGLALLLCSLR), and 163–183 (VGPLLVHTGLIVFMVGAVVGA).

The protein belongs to the Ccs1/CcsB family. May interact with CcsA.

Its subcellular location is the cellular thylakoid membrane. Its function is as follows. Required during biogenesis of c-type cytochromes (cytochrome c6 and cytochrome f) at the step of heme attachment. The polypeptide is Cytochrome c biogenesis protein CcsB (Synechococcus sp. (strain RCC307)).